We begin with the raw amino-acid sequence, 61 residues long: 2S seed storage albumin protein (61 aa).

Belongs to the 2S seed storage albumins family. In terms of assembly, the mature protein consists of a small and a large chain linked by 2 disulfide bonds.

In terms of biological role, this is a 2S seed storage protein. Inhibits cell-free protein synthesis. The sequence is that of 2S seed storage albumin protein from Cucurbita moschata (Winter crookneck squash).